The primary structure comprises 425 residues: Dihydroorotase (425 aa).

Residues His-56 and His-58 each coordinate Zn(2+). Substrate contacts are provided by residues 58–60 (HWR) and Asn-90. Zn(2+) is bound by residues Asp-147, His-174, and His-227. Asn-273 serves as a coordination point for substrate. Asp-300 contacts Zn(2+). The active site involves Asp-300. Residues His-304 and 318–319 (FG) contribute to the substrate site.

Belongs to the metallo-dependent hydrolases superfamily. DHOase family. Class I DHOase subfamily. It depends on Zn(2+) as a cofactor.

The enzyme catalyses (S)-dihydroorotate + H2O = N-carbamoyl-L-aspartate + H(+). The protein operates within pyrimidine metabolism; UMP biosynthesis via de novo pathway; (S)-dihydroorotate from bicarbonate: step 3/3. Functionally, catalyzes the reversible cyclization of carbamoyl aspartate to dihydroorotate. The sequence is that of Dihydroorotase from Fusobacterium nucleatum subsp. nucleatum (strain ATCC 25586 / DSM 15643 / BCRC 10681 / CIP 101130 / JCM 8532 / KCTC 2640 / LMG 13131 / VPI 4355).